We begin with the raw amino-acid sequence, 556 residues long: 2-succinyl-5-enolpyruvyl-6-hydroxy-3-cyclohexene-1-carboxylate synthase (556 aa).

Belongs to the TPP enzyme family. MenD subfamily. Homodimer. Requires Mg(2+) as cofactor. Mn(2+) serves as cofactor. Thiamine diphosphate is required as a cofactor.

The catalysed reaction is isochorismate + 2-oxoglutarate + H(+) = 5-enolpyruvoyl-6-hydroxy-2-succinyl-cyclohex-3-ene-1-carboxylate + CO2. The protein operates within quinol/quinone metabolism; 1,4-dihydroxy-2-naphthoate biosynthesis; 1,4-dihydroxy-2-naphthoate from chorismate: step 2/7. Its pathway is quinol/quinone metabolism; menaquinone biosynthesis. Catalyzes the thiamine diphosphate-dependent decarboxylation of 2-oxoglutarate and the subsequent addition of the resulting succinic semialdehyde-thiamine pyrophosphate anion to isochorismate to yield 2-succinyl-5-enolpyruvyl-6-hydroxy-3-cyclohexene-1-carboxylate (SEPHCHC). This is 2-succinyl-5-enolpyruvyl-6-hydroxy-3-cyclohexene-1-carboxylate synthase from Staphylococcus epidermidis (strain ATCC 35984 / DSM 28319 / BCRC 17069 / CCUG 31568 / BM 3577 / RP62A).